Here is a 428-residue protein sequence, read N- to C-terminus: Light-independent protochlorophyllide reductase subunit N (428 aa).

[4Fe-4S] cluster is bound by residues Cys29, Cys54, and Cys115.

This sequence belongs to the BchN/ChlN family. As to quaternary structure, protochlorophyllide reductase is composed of three subunits; BchL, BchN and BchB. Forms a heterotetramer of two BchB and two BchN subunits. [4Fe-4S] cluster serves as cofactor.

It carries out the reaction chlorophyllide a + oxidized 2[4Fe-4S]-[ferredoxin] + 2 ADP + 2 phosphate = protochlorophyllide a + reduced 2[4Fe-4S]-[ferredoxin] + 2 ATP + 2 H2O. Its pathway is porphyrin-containing compound metabolism; bacteriochlorophyll biosynthesis (light-independent). Functionally, component of the dark-operative protochlorophyllide reductase (DPOR) that uses Mg-ATP and reduced ferredoxin to reduce ring D of protochlorophyllide (Pchlide) to form chlorophyllide a (Chlide). This reaction is light-independent. The NB-protein (BchN-BchB) is the catalytic component of the complex. The chain is Light-independent protochlorophyllide reductase subunit N from Cereibacter sphaeroides (strain ATCC 17025 / ATH 2.4.3) (Rhodobacter sphaeroides).